A 111-amino-acid chain; its full sequence is UPF0235 protein glr3835 (111 aa).

The protein belongs to the UPF0235 family.

This is UPF0235 protein glr3835 from Gloeobacter violaceus (strain ATCC 29082 / PCC 7421).